Consider the following 196-residue polypeptide: NADH-quinone oxidoreductase subunit B (196 aa).

Residues cysteine 63, cysteine 64, cysteine 129, and cysteine 159 each contribute to the [4Fe-4S] cluster site.

Belongs to the complex I 20 kDa subunit family. In terms of assembly, NDH-1 is composed of 14 different subunits. Subunits NuoB, C, D, E, F, and G constitute the peripheral sector of the complex. Requires [4Fe-4S] cluster as cofactor.

The protein resides in the cell inner membrane. The enzyme catalyses a quinone + NADH + 5 H(+)(in) = a quinol + NAD(+) + 4 H(+)(out). In terms of biological role, NDH-1 shuttles electrons from NADH, via FMN and iron-sulfur (Fe-S) centers, to quinones in the respiratory chain. The immediate electron acceptor for the enzyme in this species is believed to be a menaquinone. Couples the redox reaction to proton translocation (for every two electrons transferred, four hydrogen ions are translocated across the cytoplasmic membrane), and thus conserves the redox energy in a proton gradient. In Bacteroides fragilis (strain ATCC 25285 / DSM 2151 / CCUG 4856 / JCM 11019 / LMG 10263 / NCTC 9343 / Onslow / VPI 2553 / EN-2), this protein is NADH-quinone oxidoreductase subunit B.